The chain runs to 396 residues: L-lactate dehydrogenase (396 aa).

Residues 1 to 380 (MIISAASDYR…TQDSLVQVLG (380 aa)) form the FMN hydroxy acid dehydrogenase domain. Position 24 (tyrosine 24) interacts with substrate. FMN contacts are provided by serine 106 and glutamine 127. Tyrosine 129 lines the substrate pocket. Threonine 155 provides a ligand contact to FMN. Arginine 164 contributes to the substrate binding site. Position 251 (lysine 251) interacts with FMN. Histidine 275 functions as the Proton acceptor in the catalytic mechanism. Position 278 (arginine 278) interacts with substrate. FMN is bound at residue 306 to 330 (DSGIRNGLDVVRMIALGADTVLLGR).

The protein belongs to the FMN-dependent alpha-hydroxy acid dehydrogenase family. Requires FMN as cofactor.

Its subcellular location is the cell inner membrane. It catalyses the reaction (S)-lactate + A = pyruvate + AH2. Functionally, catalyzes the conversion of L-lactate to pyruvate. Is coupled to the respiratory chain. This chain is L-lactate dehydrogenase, found in Escherichia coli O1:K1 / APEC.